The chain runs to 197 residues: 3-isopropylmalate dehydratase small subunit (197 aa).

The protein belongs to the LeuD family. LeuD type 1 subfamily. As to quaternary structure, heterodimer of LeuC and LeuD.

The catalysed reaction is (2R,3S)-3-isopropylmalate = (2S)-2-isopropylmalate. Its pathway is amino-acid biosynthesis; L-leucine biosynthesis; L-leucine from 3-methyl-2-oxobutanoate: step 2/4. Its function is as follows. Catalyzes the isomerization between 2-isopropylmalate and 3-isopropylmalate, via the formation of 2-isopropylmaleate. This Streptomyces griseus subsp. griseus (strain JCM 4626 / CBS 651.72 / NBRC 13350 / KCC S-0626 / ISP 5235) protein is 3-isopropylmalate dehydratase small subunit.